A 248-amino-acid chain; its full sequence is 14-3-3 protein zeta (248 aa).

This sequence belongs to the 14-3-3 family. Homodimer.

The protein localises to the cytoplasm. In terms of biological role, adapter protein implicated in the regulation of a large spectrum of both general and specialized signaling pathways. Binds to a large number of partners, usually by recognition of a phosphoserine or phosphothreonine motif. Binding generally results in the modulation of the activity of the binding partner. The sequence is that of 14-3-3 protein zeta (14-3-3zeta) from Aedes aegypti (Yellowfever mosquito).